Here is a 196-residue protein sequence, read N- to C-terminus: tRNA (pseudouridine(54)-N(1))-methyltransferase (196 aa).

Residue Leu-126 coordinates S-adenosyl-L-methionine.

Belongs to the methyltransferase superfamily. TrmY family. Homodimer.

Its subcellular location is the cytoplasm. It carries out the reaction pseudouridine(54) in tRNA + S-adenosyl-L-methionine = N(1)-methylpseudouridine(54) in tRNA + S-adenosyl-L-homocysteine + H(+). Functionally, specifically catalyzes the N1-methylation of pseudouridine at position 54 (Psi54) in tRNAs. The protein is tRNA (pseudouridine(54)-N(1))-methyltransferase of Halobacterium salinarum (strain ATCC 700922 / JCM 11081 / NRC-1) (Halobacterium halobium).